Reading from the N-terminus, the 84-residue chain is MESVITATIIGASLLLAFAALGTAIGFAILGGKFLESSSRQPELASSLQTKMFIVAGLLDAIAMIAVGISLLFIFANPFIDLLK.

2 helical membrane-spanning segments follow: residues 9–29 (IIGA…GFAI) and 54–74 (IVAG…LLFI).

It belongs to the ATPase C chain family. As to quaternary structure, F-type ATPases have 2 components, F(1) - the catalytic core - and F(0) - the membrane proton channel. F(1) has five subunits: alpha(3), beta(3), gamma(1), delta(1), epsilon(1). F(0) has three main subunits: a(1), b(2) and c(10-14). The alpha and beta chains form an alternating ring which encloses part of the gamma chain. F(1) is attached to F(0) by a central stalk formed by the gamma and epsilon chains, while a peripheral stalk is formed by the delta and b chains.

It is found in the cell inner membrane. In terms of biological role, f(1)F(0) ATP synthase produces ATP from ADP in the presence of a proton or sodium gradient. F-type ATPases consist of two structural domains, F(1) containing the extramembraneous catalytic core and F(0) containing the membrane proton channel, linked together by a central stalk and a peripheral stalk. During catalysis, ATP synthesis in the catalytic domain of F(1) is coupled via a rotary mechanism of the central stalk subunits to proton translocation. Its function is as follows. Key component of the F(0) channel; it plays a direct role in translocation across the membrane. A homomeric c-ring of between 10-14 subunits forms the central stalk rotor element with the F(1) delta and epsilon subunits. The polypeptide is ATP synthase subunit c (Haemophilus ducreyi (strain 35000HP / ATCC 700724)).